The chain runs to 294 residues: 33 kDa chaperonin (294 aa).

2 disulfide bridges follow: C236–C238 and C269–C272.

This sequence belongs to the HSP33 family. Under oxidizing conditions two disulfide bonds are formed involving the reactive cysteines. Under reducing conditions zinc is bound to the reactive cysteines and the protein is inactive.

The protein localises to the cytoplasm. In terms of biological role, redox regulated molecular chaperone. Protects both thermally unfolding and oxidatively damaged proteins from irreversible aggregation. Plays an important role in the bacterial defense system toward oxidative stress. In Desulforamulus reducens (strain ATCC BAA-1160 / DSM 100696 / MI-1) (Desulfotomaculum reducens), this protein is 33 kDa chaperonin.